The sequence spans 137 residues: ATP synthase epsilon chain (137 aa).

It belongs to the ATPase epsilon chain family. In terms of assembly, F-type ATPases have 2 components, CF(1) - the catalytic core - and CF(0) - the membrane proton channel. CF(1) has five subunits: alpha(3), beta(3), gamma(1), delta(1), epsilon(1). CF(0) has three main subunits: a, b and c.

It localises to the cell membrane. Produces ATP from ADP in the presence of a proton gradient across the membrane. In Desulforudis audaxviator (strain MP104C), this protein is ATP synthase epsilon chain.